A 321-amino-acid chain; its full sequence is GDP-L-fucose synthase (321 aa).

14-20 (GGSGLVG) serves as a coordination point for NADP(+). The active-site Proton donor/acceptor is Tyr-143. NADP(+) is bound by residues Lys-147, 170-173 (PTNV), and His-186. Substrate contacts are provided by Lys-194, Trp-208, Arg-215, and Asp-277.

Belongs to the NAD(P)-dependent epimerase/dehydratase family. Fucose synthase subfamily. As to quaternary structure, homodimer.

It carries out the reaction GDP-beta-L-fucose + NADP(+) = GDP-4-dehydro-alpha-D-rhamnose + NADPH + H(+). Its pathway is nucleotide-sugar biosynthesis; GDP-L-fucose biosynthesis via de novo pathway; GDP-L-fucose from GDP-alpha-D-mannose: step 2/2. Functionally, catalyzes the two-step NADP-dependent conversion of GDP-4-dehydro-6-deoxy-D-mannose to GDP-fucose, involving an epimerase and a reductase reaction. The sequence is that of GDP-L-fucose synthase (GFUS) from Cricetulus griseus (Chinese hamster).